We begin with the raw amino-acid sequence, 384 residues long: F-box only protein 5-B (384 aa).

Disordered regions lie at residues 1-20 and 79-106; these read MMCG…KSSA and DEEN…ETDS. Positions 9–19 are enriched in low complexity; the sequence is PSPKKLLSKSS. Over residues 83-99 the composition is skewed to polar residues; the sequence is SSLQDSGYSSILQNDSP. The F-box domain occupies 191-238; the sequence is AELFHRDFKHLLTKILRHLNAMDLINVIGVSTTWRKILQKDNWAYNTY. The segment at 311-359 adopts a ZBR-type zinc-finger fold; the sequence is SLKACVDCGSPAKYDSYLHRAICTRESCKLDFCTLCSCKYHSSKSCLIS. Positions 315, 318, 333, 338, 343, 346, 351, and 356 each coordinate Zn(2+).

As to quaternary structure, part of a SCF (SKP1-cullin-F-box) protein ligase complex. Interacts with btrc. Interacts with skp1. Interacts with cdc20. Interacts with pin1; stabilizes fbxo5 by preventing its association with btrc in an isomerization-dependent pathway; this interaction is present during G2 phase and prevents fbxo5 degradation. Interacts with plk1. Proteolysed; proteolysis is induced by both cyclin B-cdk1 and cyclin A-cdk1/2 complex through probable phosphorylation. Proteolysis is inhibited by pin1 during G2.

The protein resides in the nucleus. The protein localises to the cytoplasm. It is found in the cytoskeleton. It localises to the spindle. Its subcellular location is the microtubule organizing center. The protein resides in the centrosome. The protein operates within protein modification; protein ubiquitination. Functionally, regulates progression through early mitosis by inhibiting the anaphase promoting complex/cyclosome (APC). Binds to the APC activators cdc20 to prevent APC activation. Can also bind directly to the APC to inhibit substrate-binding. Required to arrest unfertilized eggs at metaphase of meiosis II, by preventing their release from metaphase of meiosis II, through inhibition of APC-dependent cyclin B destruction leading to stabilization of cyclin B-cdk1 complex activity. This is F-box only protein 5-B (fbxo5-b) from Xenopus laevis (African clawed frog).